Consider the following 104-residue polypeptide: L-rhamnose mutarotase (104 aa).

Y18 lines the substrate pocket. The active-site Proton donor is H22. Substrate is bound by residues Y41 and 76–77 (WW).

The protein belongs to the rhamnose mutarotase family. Homodimer.

It is found in the cytoplasm. It catalyses the reaction alpha-L-rhamnose = beta-L-rhamnose. The protein operates within carbohydrate metabolism; L-rhamnose metabolism. Its function is as follows. Involved in the anomeric conversion of L-rhamnose. The polypeptide is L-rhamnose mutarotase (Opitutus terrae (strain DSM 11246 / JCM 15787 / PB90-1)).